Here is a 405-residue protein sequence, read N- to C-terminus: Syndecan-3 (405 aa).

An N-terminal signal peptide occupies residues 1–22; that stretch reads MPAELRRLAVLLLLLSARAALA. The Extracellular portion of the chain corresponds to 23–347; sequence QPWRNENYER…PQKNILERKE (325 aa). Residues 31–59 form a disordered region; the sequence is ERPVDLEGSGDDDPFGDDELDDIYSGSGS. A compositionally biased stretch (acidic residues) spans 38–52; that stretch reads GSGDDDPFGDDELDD. 5 O-linked (Xyl...) (glycosaminoglycan) serine glycosylation sites follow: S39, S55, S57, S59, and S66. Disordered stretches follow at residues 134–159 and 191–301; these read TTTA…ATTT and TRAT…ELGN. The segment covering 191 to 201 has biased composition (low complexity); sequence TRATTLETPTT. Polar residues predominate over residues 202–237; that stretch reads SIPETSVLTEVTTSRLVPSSTAKPRSLPKPSTSRTA. 3 O-linked (Xyl...) (glycosaminoglycan) serine glycosylation sites follow: S280, S283, and S330. The helical transmembrane segment at 348-372 threads the bilayer; it reads VLIAVIVGGVVGALFAAFLVMLLIY. Over 373–405 the chain is Cytoplasmic; it reads RMKKKDEGSYTLEEPKQANVTYQKPDKQEEFYA.

This sequence belongs to the syndecan proteoglycan family. O-glycosylated within the Thr/Ser-rich region which could interact with lectin domains on other molecules. In terms of tissue distribution, proximal chondrogenic central core of embryonic limb buds where cartilage differentiation is being initiated.

It is found in the membrane. Cell surface proteoglycan that may bear both heparan sulfate and chondroitin sulfate. The multiple functional domains provide potential sites for mediating the adhesive cell-matrix interactions and cytoskeletal reorganization involved in limb chondrogenesis. Interaction with other matrix ligands as well as phosphorylation and shedding of the ectodomain might be involved in cell shape changes that occur during chondrogenesis. Furthermore, shedding of the ectodomain might break the adhesive interactions that promoted condensation, thus facilitating the deposition of cartilage matrix molecules. This is Syndecan-3 (SDC3) from Gallus gallus (Chicken).